The chain runs to 502 residues: ATP synthase subunit beta (502 aa).

Residue 156 to 163 participates in ATP binding; that stretch reads GGAGVGKT.

Belongs to the ATPase alpha/beta chains family. In terms of assembly, F-type ATPases have 2 components, CF(1) - the catalytic core - and CF(0) - the membrane proton channel. CF(1) has five subunits: alpha(3), beta(3), gamma(1), delta(1), epsilon(1). CF(0) has three main subunits: a(1), b(2) and c(9-12). The alpha and beta chains form an alternating ring which encloses part of the gamma chain. CF(1) is attached to CF(0) by a central stalk formed by the gamma and epsilon chains, while a peripheral stalk is formed by the delta and b chains.

The protein resides in the cell membrane. The enzyme catalyses ATP + H2O + 4 H(+)(in) = ADP + phosphate + 5 H(+)(out). Its function is as follows. Produces ATP from ADP in the presence of a proton gradient across the membrane. The catalytic sites are hosted primarily by the beta subunits. The protein is ATP synthase subunit beta of Cellulophaga lytica (Cytophaga lytica).